Here is a 277-residue protein sequence, read N- to C-terminus: Tumor necrosis factor receptor superfamily member 4 (277 aa).

The N-terminal stretch at 1–28 (MCVGARRLGRGPCAALLLLGLGLSTVTG) is a signal peptide. Residues 29–214 (LHCVGDTYPS…RPVEVPGGRA (186 aa)) lie on the Extracellular side of the membrane. TNFR-Cys repeat units lie at residues 30-65 (HCVG…TVCR) and 66-107 (PCGP…DTVC). Intrachain disulfides connect C31–C42, C43–C56, C46–C64, C67–C81, C84–C99, C87–C107, C109–C125, and C128–C141. A TNFR-Cys 3; truncated repeat occupies 108–126 (RCRAGTQPLDSYKPGVDCA). The TNFR-Cys 4 repeat unit spans residues 127-167 (PCPPGHFSPGDNQACKPWTNCTLAGKHTLQPASNSSDAICE). N-linked (GlcNAc...) asparagine glycans are attached at residues N146 and N160. A disulfide bond links C147 and C166. The disordered stretch occupies residues 158 to 209 (ASNSSDAICEDRDPPATQPQETQGPPARPITVQPTEAWPRTSQGPSTRPVEV). A helical transmembrane segment spans residues 215-235 (VAAILGLGLVLGLLGPLAILL). Over 236-277 (ALYLLRRDQRLPPDAHKPPGGGSFRTPIQEEQADAHSTLAKI) the chain is Cytoplasmic. Positions 248-277 (PDAHKPPGGGSFRTPIQEEQADAHSTLAKI) are disordered.

In terms of assembly, interacts with TRAF2, TRAF3 and TRAF5. As to quaternary structure, (Microbial infection) Interacts with Human herpesvirus 6B/HHV-6B gQ1:gQ2 proteins.

The protein localises to the membrane. Receptor for TNFSF4/OX40L/GP34. Is a costimulatory molecule implicated in long-term T-cell immunity. Its function is as follows. (Microbial infection) Acts as a receptor for human herpesvirus 6B/HHV-6B. The chain is Tumor necrosis factor receptor superfamily member 4 (TNFRSF4) from Homo sapiens (Human).